Here is a 477-residue protein sequence, read N- to C-terminus: Glutamyl-tRNA(Gln) amidotransferase subunit A (477 aa).

Catalysis depends on charge relay system residues Lys76 and Ser151. The active-site Acyl-ester intermediate is the Ser175.

It belongs to the amidase family. GatA subfamily. Heterotrimer of A, B and C subunits.

It catalyses the reaction L-glutamyl-tRNA(Gln) + L-glutamine + ATP + H2O = L-glutaminyl-tRNA(Gln) + L-glutamate + ADP + phosphate + H(+). Its function is as follows. Allows the formation of correctly charged Gln-tRNA(Gln) through the transamidation of misacylated Glu-tRNA(Gln) in organisms which lack glutaminyl-tRNA synthetase. The reaction takes place in the presence of glutamine and ATP through an activated gamma-phospho-Glu-tRNA(Gln). In Chlorobium phaeobacteroides (strain BS1), this protein is Glutamyl-tRNA(Gln) amidotransferase subunit A.